We begin with the raw amino-acid sequence, 378 residues long: UDP-N-acetylglucosamine--N-acetylmuramyl-(pentapeptide) pyrophosphoryl-undecaprenol N-acetylglucosamine transferase (378 aa).

Residues 14-16 (TGG), N125, R165, S193, and Q293 contribute to the UDP-N-acetyl-alpha-D-glucosamine site.

It belongs to the glycosyltransferase 28 family. MurG subfamily.

The protein resides in the cell inner membrane. It catalyses the reaction di-trans,octa-cis-undecaprenyl diphospho-N-acetyl-alpha-D-muramoyl-L-alanyl-D-glutamyl-meso-2,6-diaminopimeloyl-D-alanyl-D-alanine + UDP-N-acetyl-alpha-D-glucosamine = di-trans,octa-cis-undecaprenyl diphospho-[N-acetyl-alpha-D-glucosaminyl-(1-&gt;4)]-N-acetyl-alpha-D-muramoyl-L-alanyl-D-glutamyl-meso-2,6-diaminopimeloyl-D-alanyl-D-alanine + UDP + H(+). The protein operates within cell wall biogenesis; peptidoglycan biosynthesis. Its function is as follows. Cell wall formation. Catalyzes the transfer of a GlcNAc subunit on undecaprenyl-pyrophosphoryl-MurNAc-pentapeptide (lipid intermediate I) to form undecaprenyl-pyrophosphoryl-MurNAc-(pentapeptide)GlcNAc (lipid intermediate II). The protein is UDP-N-acetylglucosamine--N-acetylmuramyl-(pentapeptide) pyrophosphoryl-undecaprenol N-acetylglucosamine transferase of Bartonella quintana (strain Toulouse) (Rochalimaea quintana).